The sequence spans 494 residues: MPTPILDFDALAQTISGRTVLCIGDIMLDEFVYGEVSRISPEAPTPVIVAQRSEIHIGGAGNVARNVASLGARCIFVGLVGEDDAGKRLAAALADQAAIESVLVCDPSRPTTRKVRFVSEHFSTHMLRADWEQAQPASDEVEAKLIEAILPQIARADIVLLSDYAKGVLTARVIRHTIDAARKLGKPVIVDPKSLNWAIYRGATLLTPNRKEFAEATRSRADTPQSIVDASEDVMRLADCEAILVTQGEHGMTLVPRNGAAVHVPAVPVKVRDVSGAGDTVAAALAVSLAAGADWDTALRVANAAASVAVSKLGTAIVSTAELRRKILPHAYLAAEEKIVLEPAALDAQLAEWRTQGLRVGFTNGCFDILHPGHVKVLTAARGACDRLVVGLNSDASVRRLKGADRPVQDERARAEVLAALEAVDLVVIFEEDTPIDLITRIKPAALVKGGDYTREQVVGHEVVEAAGGVVVLVDILQGFSTTALVHRARGGAK.

Residues 1–334 (MPTPILDFDA…RKILPHAYLA (334 aa)) form a ribokinase region. 209–212 (NRKE) serves as a coordination point for ATP. The active site involves Asp279. The segment at 362–494 (FTNGCFDILH…LVHRARGGAK (133 aa)) is cytidylyltransferase.

The protein in the N-terminal section; belongs to the carbohydrate kinase PfkB family. It in the C-terminal section; belongs to the cytidylyltransferase family. In terms of assembly, homodimer.

It catalyses the reaction D-glycero-beta-D-manno-heptose 7-phosphate + ATP = D-glycero-beta-D-manno-heptose 1,7-bisphosphate + ADP + H(+). It carries out the reaction D-glycero-beta-D-manno-heptose 1-phosphate + ATP + H(+) = ADP-D-glycero-beta-D-manno-heptose + diphosphate. It functions in the pathway nucleotide-sugar biosynthesis; ADP-L-glycero-beta-D-manno-heptose biosynthesis; ADP-L-glycero-beta-D-manno-heptose from D-glycero-beta-D-manno-heptose 7-phosphate: step 1/4. The protein operates within nucleotide-sugar biosynthesis; ADP-L-glycero-beta-D-manno-heptose biosynthesis; ADP-L-glycero-beta-D-manno-heptose from D-glycero-beta-D-manno-heptose 7-phosphate: step 3/4. Its function is as follows. Catalyzes the phosphorylation of D-glycero-D-manno-heptose 7-phosphate at the C-1 position to selectively form D-glycero-beta-D-manno-heptose-1,7-bisphosphate. Catalyzes the ADP transfer from ATP to D-glycero-beta-D-manno-heptose 1-phosphate, yielding ADP-D-glycero-beta-D-manno-heptose. The chain is Bifunctional protein HldE from Bradyrhizobium diazoefficiens (strain JCM 10833 / BCRC 13528 / IAM 13628 / NBRC 14792 / USDA 110).